The chain runs to 352 residues: Protein RecA (352 aa).

67–74 is an ATP binding site; it reads GPESSGKT.

This sequence belongs to the RecA family.

It localises to the cytoplasm. Functionally, can catalyze the hydrolysis of ATP in the presence of single-stranded DNA, the ATP-dependent uptake of single-stranded DNA by duplex DNA, and the ATP-dependent hybridization of homologous single-stranded DNAs. It interacts with LexA causing its activation and leading to its autocatalytic cleavage. The chain is Protein RecA from Chlamydia trachomatis serovar A (strain ATCC VR-571B / DSM 19440 / HAR-13).